The following is a 311-amino-acid chain: ADP-ribosyl cyclase/cyclic ADP-ribose hydrolase 2 (311 aa).

An N-terminal signal peptide occupies residues 1 to 24 (MAVQGGLLSLWLWLWLSLLTVLLG). 3 disulfide bridges follow: C46–C60, C76–C156, and C137–C150. 2 N-linked (GlcNAc...) asparagine glycosylation sites follow: N59 and N88. Residue W102 coordinates NAD(+). A nicotinamide-binding site is contributed by W102. The N-linked (GlcNAc...) asparagine glycan is linked to N141. W165 serves as a coordination point for NAD(+). N-linked (GlcNAc...) asparagine glycosylation occurs at N185. Position 203 (E203) interacts with NAD(+). Cystine bridges form between C231-C252 and C264-C273. S286 carries GPI-anchor amidated serine lipidation. The propeptide occupies 287–311 (ASLHAIGDASLLISLLVALASSSQA).

The protein belongs to the ADP-ribosyl cyclase family. As to quaternary structure, homodimer. Expressed in the bone marrow, spleen and thymus in lymphoid organs, and the lung, kidney and heart in non-lymphoid organs.

It is found in the cell membrane. It catalyses the reaction NAD(+) + H2O = ADP-D-ribose + nicotinamide + H(+). It carries out the reaction NAD(+) = cyclic ADP-beta-D-ribose + nicotinamide + H(+). The enzyme catalyses cyclic ADP-beta-D-ribose + H2O = ADP-D-ribose. Its function is as follows. Catalyzes both the synthesis of cyclic ADP-beta-D-ribose (cADPR) from NAD(+), and its hydrolysis to ADP-D-ribose (ADPR). Cyclic ADPR is known to serve as an endogenous second messenger that elicits calcium release from intracellular stores, and thus regulates the mobilization of intracellular calcium. May be involved in pre-B-cell growth. The polypeptide is ADP-ribosyl cyclase/cyclic ADP-ribose hydrolase 2 (Bst1) (Mus musculus (Mouse)).